Consider the following 981-residue polypeptide: Calsyntenin-1 (981 aa).

The signal sequence occupies residues 1–28; sequence MLRRPAPALAPAARLLLAGLLCGGGVWA. Over 29–859 the chain is Extracellular; the sequence is ARVNKHKPWL…PHPFAVVPST (831 aa). Cadherin domains follow at residues 38–164 and 165–265; these read LEPT…APVF and KEKS…TPGW. N346, N366, and N515 each carry an N-linked (GlcNAc...) asparagine glycan. Residues 860–880 traverse the membrane as a helical segment; it reads ATVVIVVCVSFLVFMIILGVF. Residues 881–981 lie on the Cytoplasmic side of the membrane; it reads RIRAAHRRTM…LEWDDSTLSY (101 aa). A disordered region spans residues 915–981; that stretch reads METYEDQHSS…LEWDDSTLSY (67 aa). A compositionally biased stretch (acidic residues) spans 925–960; it reads EEEEEEEEEEESEDGEEEDDITSAESESSEEEEGEQ. The span at 962–981 shows a compositional bias: polar residues; the sequence is DPQNATRQQQLEWDDSTLSY.

The protein belongs to the calsyntenin family. As to quaternary structure, directly interacts with APBA2. Forms a tripartite complex with APBA2 and APP. Interacts with KLC1. Interacts with APBB1; this interaction stabilizes AlcICD metabolism. In terms of assembly, interacts with PSEN1. In terms of processing, proteolytically processed under normal cellular conditions. A primary zeta-cleavage generates a large extracellular (soluble) N-terminal domain (sAlc) and a short C-terminal transmembrane fragment (CTF1). A secondary cleavage catalyzed by presenilin gamma-secretase within the transmembrane domain releases the beta-Alc-alpha chain in the extracellular milieu and produces an intracellular fragment (AlcICD). This processing is strongly suppressed in the tripartite complex formed with APBA2 and APP, which seems to prevent the association with PSEN1. As to expression, expressed in the brain and, a lower level, in the heart, skeletal muscle, kidney and placenta. Accumulates in dystrophic neurites around the amyloid core of Alzheimer disease senile plaques (at protein level).

Its subcellular location is the postsynaptic cell membrane. The protein localises to the endoplasmic reticulum membrane. The protein resides in the golgi apparatus membrane. It localises to the cell projection. It is found in the neuron projection. Its subcellular location is the nucleus. Functionally, postsynaptic adhesion molecule that binds to presynaptic neurexins to mediate both excitatory and inhibitory synapse formation. Promotes synapse development by acting as a cell adhesion molecule at the postsynaptic membrane, which associates with neurexin-alpha at the presynaptic membrane. Also functions as a cargo in axonal anterograde transport by acting as a molecular adapter that promotes KLC1 association with vesicles. Complex formation with APBA2 and APP, stabilizes APP metabolism and enhances APBA2-mediated suppression of beta-APP40 secretion, due to the retardation of intracellular APP maturation. Its function is as follows. As intracellular fragment AlcICD, suppresses APBB1-dependent transactivation stimulated by APP C-terminal intracellular fragment (AICD), most probably by competing with AICD for APBB1-binding. In complex with APBA2 and C99, a C-terminal APP fragment, abolishes C99 interaction with PSEN1 and thus APP C99 cleavage by gamma-secretase, most probably through stabilization of the direct interaction between APBA2 and APP. The polypeptide is Calsyntenin-1 (Homo sapiens (Human)).